The following is a 341-amino-acid chain: MQKILDTLYQGKNINQKQSEALLHSIIKEKLSAIQIASALISMKIRGETFEEIIGAVNILLTHAKPFPRPNSLFADITGTGGDNSNTINISTTSAIVAATCGAKIIKHGNRSISSLTGSMDLLKQHCLILNSPQQARKNFDELGICFLYAPQYYTVLHRIMPIRKQLKIPTLFNIVGPLINPSKPPLTLIGVYKKELLSPIIRILQLLKYNHAIVVHCGGIDEVGLHSPTHIAELHNSIINNYILTASDFGLDSYPIEILRCYSRKQAREYMINILKGRGKPAHSAVIAANVALLLKLFGYTDLRANAQLALEKIHYGIPYTLLSSLSETKIQNHATHNTR.

5-phospho-alpha-D-ribose 1-diphosphate-binding positions include glycine 79, 82–83, threonine 87, 89–92, 107–115, and serine 119; these read GD, NIST, and KHGNRSISS. Residue glycine 79 participates in anthranilate binding. Serine 91 contacts Mg(2+). Asparagine 110 is an anthranilate binding site. Position 164 (arginine 164) interacts with anthranilate. Positions 222 and 223 each coordinate Mg(2+).

Belongs to the anthranilate phosphoribosyltransferase family. Homodimer. It depends on Mg(2+) as a cofactor.

It carries out the reaction N-(5-phospho-beta-D-ribosyl)anthranilate + diphosphate = 5-phospho-alpha-D-ribose 1-diphosphate + anthranilate. It functions in the pathway amino-acid biosynthesis; L-tryptophan biosynthesis; L-tryptophan from chorismate: step 2/5. In terms of biological role, catalyzes the transfer of the phosphoribosyl group of 5-phosphorylribose-1-pyrophosphate (PRPP) to anthranilate to yield N-(5'-phosphoribosyl)-anthranilate (PRA). The protein is Anthranilate phosphoribosyltransferase of Blochmanniella pennsylvanica (strain BPEN).